A 255-amino-acid chain; its full sequence is 5'-nucleotidase SurE (255 aa).

A divalent metal cation-binding residues include aspartate 16, aspartate 17, serine 47, and asparagine 100.

It belongs to the SurE nucleotidase family. Requires a divalent metal cation as cofactor.

It is found in the cytoplasm. The enzyme catalyses a ribonucleoside 5'-phosphate + H2O = a ribonucleoside + phosphate. Nucleotidase that shows phosphatase activity on nucleoside 5'-monophosphates. In Vibrio vulnificus (strain YJ016), this protein is 5'-nucleotidase SurE.